The sequence spans 1388 residues: MPPGTKGDPSNVTQPLPCLPSAEEDAIKVFVRIRPPVEGTLTGVDGEQGLCLTALSSTTIRLHSKPEPKMFTFDHVANVDTNQESVFSSVAKNIVESCMNGYNGTIFAYGQTGSGKTFTMLGPSESDNFTHNLRGVIPRSFEYLFFLINREKEKAGEGKSFLCKCSFIEIYNEQIFDLLDSASAGLFLREHIKKGVFVVGAVEQVVTSAAEAYQVLSMGWRNRRVASTSMNRESSRSHAVFTVTIESMEKTNDLVNIRSSQLNLVDLAGSERQKDTQTEGVRLKEAGSINRSLSCLGQVITALVDVANGRQRHICYRDSKLTFLLRDSLGGNAKTFYIANVHPGSKCFGETLSTLQFAQRAKLIKNKAVVNEDTQGNVSQLQAEVKKLKEQLSQLLSGQMPGDISVARVPSVGDNNMDYMNNFIEAMMILEKSDREKKVLLQKVVQLEDLCNKKEKFIQSNKMIVKFREDHISRLEKAHKEGRISLSNNEQDDFIAELKEEIRTLKEQVEHHPRVAKYALENHSLREENKRLHSLQSVKRAQEVTAQMIAELEKAFLEVSVSEKDRQVAPMHSTPIQLDNNSLMSAARMRERMLQLESELATSKQEYEEFKELTKKKQVEQESELQSLIKSNQHLENILEAIKANKRHEVSQLNRMHAAETIKNMTTPTKSYNLRSRLVPRLSPDAMPNGLMDTPKSGDVMDDIINEPIPPEMSEQAYEAIAEELRIVQEQVTALQAKLDEEEGKNIRLQQQVNKLELCSTQIQELFNSERSNWNKEQQDLIAQIKSLEKQKQENKSQEDVLKSEVHDLRVVLQSADRELGAVKGEYSLYREKQEKELSQLSARHMDVQLQLDNVRLEHETLLEEKRSLQDAFDNLEEVMKFEIDQLKQEISDSKHENETLRAEFSNLLELLETEKERRQKLTSQLEEDKENKTKELLQVVDENMHLRKQCSELMTKCEQQVTELHGLEHSLTSSKEMIADLEKKNTADKEVVADLMNQIQVHRTTIIHKTESIDLLTRELEDIHSKYSIVLLAKEESKTVIEEQEKQIEELRECLERKQSADNIEKELLCDDLAHATEELEKLTEAFNKQEALLHTHEKELVEKEQQISELTNQVKLMTDLEISREQEKIRPASSNSSSPVVLPETPRTPEGNPYDSEIANLQKRNTNLEILVSELNEERTSKNEEIIRLKMQLCETENMRLEIQNLQGMCKELKSQLENCNNVMKDSNDQKPSDMQDLKREIEKEVSERMEKGKATEHILKLQAELEETRNILCTKDHSLNELSKEIERTRSLEAKAFTEKEEIRSILEGKYEETEKLSHELDMLRKQVLFLAEENGKILGHQNPNQKIQYLVKLKKENNKLLEEAEKLRIENLFLKESKKCEHCN.

The Kinesin motor domain maps to 26–364 (AIKVFVRIRP…LQFAQRAKLI (339 aa)). ATP is bound at residue 110 to 117 (GQTGSGKT). A coiled-coil region spans residues 369 to 1383 (VVNEDTQGNV…ENLFLKESKK (1015 aa)). The tract at residues 1127-1156 (EQEKIRPASSNSSSPVVLPETPRTPEGNPY) is disordered. The tract at residues 1139 to 1388 (SSPVVLPETP…KESKKCEHCN (250 aa)) is necessary for its targeting to microtubule minus ends.

Belongs to the TRAFAC class myosin-kinesin ATPase superfamily. Kinesin family. KLP2 subfamily. Homodimer. Dimerization is required for targeting to microtubule minus ends. Found in a complex with tpx2 and microtubules. Its association with microtubules and targeting to microtubule minus ends requires tpx2. In terms of tissue distribution, strongly expressed in testis and weakly in lung (at protein level).

The protein resides in the cytoplasm. It localises to the cytoskeleton. The protein localises to the microtubule organizing center. It is found in the centrosome. Its subcellular location is the spindle. The protein resides in the spindle pole. Functionally, plus-end directed kinesin-like motor enzyme involved in mitotic spindle assembly. Required for centrosome separation and maintenance of spindle bipolarity during mitosis. This is Kinesin-like protein KIF15-A (kif15-a) from Xenopus laevis (African clawed frog).